A 280-amino-acid polypeptide reads, in one-letter code: Phosphatidylglycerol--prolipoprotein diacylglyceryl transferase (280 aa).

4 consecutive transmembrane segments (helical) span residues 30–50 (WYGLAYVVGILLGWFYARRIV), 71–91 (FLLWAAGGIVLGGRIGYILFY), 106–126 (IWNGGMSFHGGLVGTTLAMII), and 132–152 (AIPIWSLFDVVAAVVPIGLFF). Arg-154 serves as a coordination point for a 1,2-diacyl-sn-glycero-3-phospho-(1'-sn-glycerol). 3 consecutive transmembrane segments (helical) span residues 188–208 (QLYEAALEGLVLLAVLAWFVY), 217–237 (GLVTGIFVCGYAASRIFVEFF), and 251–271 (WLTMGMVLSVPMALIGIWAIA).

It belongs to the Lgt family.

The protein localises to the cell inner membrane. It catalyses the reaction L-cysteinyl-[prolipoprotein] + a 1,2-diacyl-sn-glycero-3-phospho-(1'-sn-glycerol) = an S-1,2-diacyl-sn-glyceryl-L-cysteinyl-[prolipoprotein] + sn-glycerol 1-phosphate + H(+). The protein operates within protein modification; lipoprotein biosynthesis (diacylglyceryl transfer). Its function is as follows. Catalyzes the transfer of the diacylglyceryl group from phosphatidylglycerol to the sulfhydryl group of the N-terminal cysteine of a prolipoprotein, the first step in the formation of mature lipoproteins. The sequence is that of Phosphatidylglycerol--prolipoprotein diacylglyceryl transferase from Sinorhizobium medicae (strain WSM419) (Ensifer medicae).